The primary structure comprises 541 residues: DNA ligase 1 (541 aa).

Glu-234 contributes to the ATP binding site. Catalysis depends on Lys-236, which acts as the N6-AMP-lysine intermediate. Residues Arg-241, Arg-256, Glu-286, Phe-325, Arg-398, and Lys-404 each coordinate ATP.

Belongs to the ATP-dependent DNA ligase family. Requires Mg(2+) as cofactor.

It catalyses the reaction ATP + (deoxyribonucleotide)n-3'-hydroxyl + 5'-phospho-(deoxyribonucleotide)m = (deoxyribonucleotide)n+m + AMP + diphosphate.. In terms of biological role, DNA ligase that seals nicks in double-stranded DNA during DNA replication, DNA recombination and DNA repair. This chain is DNA ligase 1, found in Korarchaeum cryptofilum (strain OPF8).